A 471-amino-acid chain; its full sequence is UDP-glycosyltransferase 1 (471 aa).

Histidine 15 serves as the catalytic Proton acceptor. An an anthocyanidin-binding site is contributed by histidine 15. Aspartate 124 acts as the Charge relay in catalysis. 8 residues coordinate UDP-alpha-D-glucose: threonine 146, alanine 348, glutamine 350, histidine 365, tryptophan 368, asparagine 369, serine 370, and glutamate 373. Alanine 388 contacts an anthocyanidin. UDP-alpha-D-glucose-binding residues include glutamate 389 and glutamine 390.

Belongs to the UDP-glycosyltransferase family. In terms of tissue distribution, expressed in roots. Detected in stems and leaves.

It carries out the reaction a 7-hydroxyisoflavone + UDP-alpha-D-glucose = a 7-hydroxyisoflavone 7-O-beta-D-glucoside + UDP + H(+). Its function is as follows. Isoflavone 7-O-glucosyltransferase converting daidzein to daidzin, genistein to genistin and formononetin to ononin. Shows some activity toward the chalcone isoliquiritigenin, the flavanones liquiritigenin and naringenin, and the flavone apigenin, but not toward cyanidin, luteolin, kaempferol, quercetin, daidzin and puerarin. In Pueraria montana var. lobata (Kudzu vine), this protein is UDP-glycosyltransferase 1.